We begin with the raw amino-acid sequence, 132 residues long: Small ribosomal subunit protein uS8 (132 aa).

It belongs to the universal ribosomal protein uS8 family. As to quaternary structure, part of the 30S ribosomal subunit. Contacts proteins S5 and S12.

Functionally, one of the primary rRNA binding proteins, it binds directly to 16S rRNA central domain where it helps coordinate assembly of the platform of the 30S subunit. This is Small ribosomal subunit protein uS8 from Pediococcus pentosaceus (strain ATCC 25745 / CCUG 21536 / LMG 10740 / 183-1w).